The sequence spans 193 residues: Ion-translocating oxidoreductase complex subunit A (193 aa).

Helical transmembrane passes span 5 to 25 (LLLF…FLGL), 47 to 67 (FVMT…LVPL), 72 to 92 (LRTM…EMVV), 102 to 122 (LLGI…VALL), 134 to 154 (ALYG…FAAI), and 171 to 191 (AIAL…SGLV).

It belongs to the NqrDE/RnfAE family. The complex is composed of six subunits: RnfA, RnfB, RnfC, RnfD, RnfE and RnfG.

The protein resides in the cell inner membrane. Functionally, part of a membrane-bound complex that couples electron transfer with translocation of ions across the membrane. This Cronobacter sakazakii (strain ATCC BAA-894) (Enterobacter sakazakii) protein is Ion-translocating oxidoreductase complex subunit A.